Here is a 197-residue protein sequence, read N- to C-terminus: Imidazoleglycerol-phosphate dehydratase (197 aa).

Belongs to the imidazoleglycerol-phosphate dehydratase family.

Its subcellular location is the cytoplasm. It carries out the reaction D-erythro-1-(imidazol-4-yl)glycerol 3-phosphate = 3-(imidazol-4-yl)-2-oxopropyl phosphate + H2O. The protein operates within amino-acid biosynthesis; L-histidine biosynthesis; L-histidine from 5-phospho-alpha-D-ribose 1-diphosphate: step 6/9. The protein is Imidazoleglycerol-phosphate dehydratase of Rhodopseudomonas palustris (strain ATCC BAA-98 / CGA009).